A 96-amino-acid polypeptide reads, in one-letter code: RING finger protein Z (96 aa).

A compositionally biased stretch (basic and acidic residues) spans 1 to 10; it reads MGNCRSKQES. Residues 1–21 are disordered; the sequence is MGNCRSKQESHPICPNTQTPE. Residue Gly-2 is the site of N-myristoyl glycine; by host attachment. An RING-type; atypical zinc finger spans residues 41-77; that stretch reads CKCCWFADRNLINCSDHYLCLRCLNVMLRTSNLCNIC. The PTAP/PSAP motif signature appears at 91 to 94; that stretch reads PTAP.

The protein belongs to the arenaviridae Z protein family. Interacts with protein NP; this interaction probably directs the encapsidated genome to budding sites. Interacts (via RING domain) with polymerase L; this interaction inhibits viral transcription and replication, Z partially blocks the product exit tunnel for the releasing nascent RNA product. Interacts with the glycoprotein complex; this interaction plays a role in virion budding. Interacts with host eIF4E; this interaction results in eIF4E reduced affinity for its substrate, the 5'-m7 G cap structure. Interacts (via late-budding domain) with host TSG101; this interaction is essential for budding and release of viral particles. Interacts with host RPLP0; this interaction may serve to load ribosome-like particles inside the virion. Interacts with host PML; this interaction induces PML bodies redistribution in the cytoplasm upon viral infection. Myristoylation is required for the role of RING finger protein Z in assembly and budding.

The protein resides in the virion. Its subcellular location is the host cytoplasm. The protein localises to the host perinuclear region. It localises to the host cell membrane. Plays a crucial role in virion assembly and budding. Expressed late in the virus life cycle, it acts as an inhibitor of viral transcription and RNA synthesis by interacting with the viral polymerase L. Presumably recruits the NP encapsidated genome to cellular membranes at budding sites via direct interaction with NP. Plays critical roles in the final steps of viral release by interacting with host TSG101, a member of the vacuolar protein-sorting pathway and using other cellular host proteins involved in vesicle formation pathway. The budding of the virus progeny occurs after association of protein Z with the viral glycoprotein complex SSP-GP1-GP2 at the cell periphery, step that requires myristoylation of protein Z. Also selectively represses protein production by associating with host eIF4E. In cell-based minigenome assay, has an inhibitory effect on the ribonucleoprotein machinery (vRNP), which is responsible for the replication and transcription of the viral genome. The chain is RING finger protein Z from Hylaeamys megacephalus (Large-headed rice rat).